A 282-amino-acid chain; its full sequence is sn-glycerol-3-phosphate transport system permease protein UgpE (282 aa).

6 helical membrane passes run 14 to 34 (LILI…FVAS), 86 to 106 (MAIA…IVFF), 112 to 132 (MFFF…RILP), 146 to 168 (YAGL…QFFL), 201 to 221 (IAAL…WPLL), and 248 to 268 (WNYV…VVVL). The 192-residue stretch at 78-269 (LWNSFVVAMA…IPPILVVVLM (192 aa)) folds into the ABC transmembrane type-1 domain.

Belongs to the binding-protein-dependent transport system permease family. As to quaternary structure, the complex is composed of two ATP-binding proteins (UgpC), two transmembrane proteins (UgpA and UgpE) and a solute-binding protein (UgpB).

The protein resides in the cell inner membrane. In terms of biological role, part of the ABC transporter complex UgpBAEC involved in sn-glycerol-3-phosphate (G3P) import. Probably responsible for the translocation of the substrate across the membrane. The chain is sn-glycerol-3-phosphate transport system permease protein UgpE (ugpE) from Brucella suis biovar 1 (strain 1330).